The chain runs to 174 residues: Suppressor of RNA silencing (174 aa).

A coiled-coil region spans residues 86 to 116 (HAQLRSLNAELDTLEAREESLRAQIKALSAG).

This sequence belongs to the virgaviridae suppressor of RNA silencing family.

Its function is as follows. Suppressor of RNA-mediated gene silencing, also known as post-transcriptional gene silencing (PTGS), a mechanism of plant viral defense that performs sequence-specific inhibition of viral mRNAs expression. This is Suppressor of RNA silencing from Soil-borne wheat mosaic virus (strain United States/Nebraska/1981) (SBWMV).